The following is a 20-amino-acid chain: Antifungal protein (20 aa).

This sequence belongs to the protease inhibitor I3 (leguminous Kunitz-type inhibitor) family.

Its function is as follows. Inhibits soybean trypsin. Has antifungal activity against R.cerealis, A.brassicae and A.niger, and weak antifungal activity against F.oxysporum. In Cullen corylifolium (Malaysian scurfpea), this protein is Antifungal protein.